A 127-amino-acid polypeptide reads, in one-letter code: Succinate dehydrogenase cytochrome b560 subunit (127 aa).

A run of 2 helical transmembrane segments spans residues 36–53 (VGLA…RIIL) and 60–83 (NLLT…FILL). Residue His-88 participates in heme binding. Residues 109–126 (LSKFSLFLLVSLSLILIF) traverse the membrane as a helical segment.

It belongs to the cytochrome b560 family. As to quaternary structure, forms part of complex II containing four subunits: a 70 kDa flavoprotein (FP), a 27 kDa iron-sulfur protein (IP), a cytochrome B and a membrane-anchoring protein. Heme serves as cofactor.

It is found in the mitochondrion inner membrane. Its pathway is carbohydrate metabolism; tricarboxylic acid cycle. Membrane-anchoring subunit of succinate dehydrogenase (SDH) that is involved in complex II of the mitochondrial electron transport chain and is responsible for transferring electrons from succinate to ubiquinone (coenzyme Q). The sequence is that of Succinate dehydrogenase cytochrome b560 subunit (SDH3) from Chondrus crispus (Carrageen Irish moss).